An 820-amino-acid polypeptide reads, in one-letter code: Leucine--tRNA ligase (820 aa).

The 'HIGH' region signature appears at 42–52; it reads PYPSGDLHMGH. The short motif at 576-580 is the 'KMSKS' region element; that stretch reads KMSKS. K579 provides a ligand contact to ATP.

It belongs to the class-I aminoacyl-tRNA synthetase family.

It is found in the cytoplasm. The enzyme catalyses tRNA(Leu) + L-leucine + ATP = L-leucyl-tRNA(Leu) + AMP + diphosphate. The sequence is that of Leucine--tRNA ligase from Coxiella burnetii (strain Dugway 5J108-111).